The sequence spans 232 residues: Cytidylate kinase (232 aa).

Residues 1-21 (MSEDTPLVVAMDGPSGTGKSS) are disordered. Residue 13–21 (GPSGTGKSS) coordinates ATP.

The protein belongs to the cytidylate kinase family. Type 1 subfamily.

It localises to the cytoplasm. It carries out the reaction CMP + ATP = CDP + ADP. It catalyses the reaction dCMP + ATP = dCDP + ADP. The polypeptide is Cytidylate kinase (Nocardia farcinica (strain IFM 10152)).